A 309-amino-acid polypeptide reads, in one-letter code: MAADESVFLRAKDRSYKGLTEDEQKEWSGPFYFIQAADPQLGLMKAWRIGDCDSGGDEWDEEVQLTKQAVQAINKLQPKPRFIVLCGDLVHAMPGSPFREQQIKDLKDALRGTDPHIPLVFVSGNHDLGNAPTPDTVEQFCHEWGDDYFSFWVGGVLCLVLNSQFFFDSSGCPELMEAHEVWLENRLQMAVQTPSRHVLVFQHIPLFLRTPDEEDDYFNLQRGIREHLIQRFKRAGVKAVFSGHYHRNAGGCHDGLDMVVSSAVGCQLGDDTHGVRVVVVTENNIIHRYHSLDQLSERGMDEDLKKLLL.

Residues Trp47–Gly250 form a catalytic region. A divalent metal cation-binding residues include Asp51, Asp88, Asn125, and His244.

This sequence belongs to the metallophosphoesterase superfamily. CPPED1 family. A divalent metal cation is required as a cofactor.

It localises to the cytoplasm. It carries out the reaction O-phospho-L-seryl-[protein] + H2O = L-seryl-[protein] + phosphate. It catalyses the reaction O-phospho-L-threonyl-[protein] + H2O = L-threonyl-[protein] + phosphate. Functionally, protein phosphatase involved in the dephosphorylation of AKT kinase family. The polypeptide is Serine/threonine-protein phosphatase CPPED1 (cpped1) (Danio rerio (Zebrafish)).